The primary structure comprises 107 residues: uncharacterized protein (107 aa).

4 helical membrane passes run Phe-9–Glu-28, Ser-33–Ile-50, Leu-55–Val-72, and Tyr-77–Gly-99.

The protein resides in the cell membrane. This is an uncharacterized protein from Archaeoglobus fulgidus (strain ATCC 49558 / DSM 4304 / JCM 9628 / NBRC 100126 / VC-16).